Reading from the N-terminus, the 102-residue chain is Small ribosomal subunit protein uS10 (102 aa).

Belongs to the universal ribosomal protein uS10 family. As to quaternary structure, part of the 30S ribosomal subunit.

In terms of biological role, involved in the binding of tRNA to the ribosomes. The protein is Small ribosomal subunit protein uS10 of Methanococcus maripaludis (strain C6 / ATCC BAA-1332).